The following is a 135-amino-acid chain: ATP synthase epsilon chain (135 aa).

The protein belongs to the ATPase epsilon chain family. In terms of assembly, F-type ATPases have 2 components, CF(1) - the catalytic core - and CF(0) - the membrane proton channel. CF(1) has five subunits: alpha(3), beta(3), gamma(1), delta(1), epsilon(1). CF(0) has three main subunits: a, b and c.

It localises to the cell inner membrane. Its function is as follows. Produces ATP from ADP in the presence of a proton gradient across the membrane. In Bradyrhizobium sp. (strain ORS 278), this protein is ATP synthase epsilon chain.